The sequence spans 211 residues: Imidazole glycerol phosphate synthase subunit HisH (211 aa).

The 206-residue stretch at 1–206 (MIGIIDYGRG…GKWVNEDATV (206 aa)) folds into the Glutamine amidotransferase type-1 domain. Cysteine 79 serves as the catalytic Nucleophile. Active-site residues include histidine 181 and glutamate 183.

In terms of assembly, heterodimer of HisH and HisF.

Its subcellular location is the cytoplasm. The enzyme catalyses 5-[(5-phospho-1-deoxy-D-ribulos-1-ylimino)methylamino]-1-(5-phospho-beta-D-ribosyl)imidazole-4-carboxamide + L-glutamine = D-erythro-1-(imidazol-4-yl)glycerol 3-phosphate + 5-amino-1-(5-phospho-beta-D-ribosyl)imidazole-4-carboxamide + L-glutamate + H(+). It catalyses the reaction L-glutamine + H2O = L-glutamate + NH4(+). It participates in amino-acid biosynthesis; L-histidine biosynthesis; L-histidine from 5-phospho-alpha-D-ribose 1-diphosphate: step 5/9. Its function is as follows. IGPS catalyzes the conversion of PRFAR and glutamine to IGP, AICAR and glutamate. The HisH subunit catalyzes the hydrolysis of glutamine to glutamate and ammonia as part of the synthesis of IGP and AICAR. The resulting ammonia molecule is channeled to the active site of HisF. This Desulfitobacterium hafniense (strain Y51) protein is Imidazole glycerol phosphate synthase subunit HisH.